Reading from the N-terminus, the 351-residue chain is Protein Wnt-4 (351 aa).

The first 22 residues, 1–22, serve as a signal peptide directing secretion; that stretch reads MSPRSCLRSLRLLVFAVFSAAA. Intrachain disulfides connect Cys-78–Cys-89, Cys-128–Cys-136, Cys-138–Cys-155, Cys-206–Cys-220, Cys-208–Cys-215, Cys-280–Cys-311, Cys-296–Cys-306, Cys-310–Cys-350, Cys-326–Cys-341, Cys-328–Cys-338, and Cys-333–Cys-334. The N-linked (GlcNAc...) asparagine glycan is linked to Asn-88. Ser-212 is lipidated: O-palmitoleoyl serine; by PORCN. N-linked (GlcNAc...) asparagine glycosylation occurs at Asn-297.

It belongs to the Wnt family. In terms of assembly, interacts with PORCN. Interacts with PKD1. Post-translationally, palmitoleoylation is required for efficient binding to frizzled receptors. Depalmitoleoylation leads to Wnt signaling pathway inhibition. In adults in lung and brain.

It is found in the secreted. The protein localises to the extracellular space. It localises to the extracellular matrix. In terms of biological role, ligand for members of the frizzled family of seven transmembrane receptors. Plays an important role in the embryonic development of the urogenital tract and the lung. Required for normal mesenchyme to epithelium transition during embryonic kidney development. Required for the formation of early epithelial renal vesicles during kidney development. Required for normal formation of the Mullerian duct in females, and normal levels of oocytes in the ovaries. Required for normal down-regulation of 3 beta-hydroxysteroid dehydrogenase in the ovary. Required for normal lung development and for normal patterning of trachael cartilage rings. The protein is Protein Wnt-4 (Wnt4) of Mus musculus (Mouse).